Here is a 492-residue protein sequence, read N- to C-terminus: Probable cytosol aminopeptidase (492 aa).

Lysine 259 and aspartate 264 together coordinate Mn(2+). Residue lysine 271 is part of the active site. 3 residues coordinate Mn(2+): aspartate 283, aspartate 342, and glutamate 344. The active site involves arginine 346.

The protein belongs to the peptidase M17 family. It depends on Mn(2+) as a cofactor.

It localises to the cytoplasm. It catalyses the reaction Release of an N-terminal amino acid, Xaa-|-Yaa-, in which Xaa is preferably Leu, but may be other amino acids including Pro although not Arg or Lys, and Yaa may be Pro. Amino acid amides and methyl esters are also readily hydrolyzed, but rates on arylamides are exceedingly low.. It carries out the reaction Release of an N-terminal amino acid, preferentially leucine, but not glutamic or aspartic acids.. In terms of biological role, presumably involved in the processing and regular turnover of intracellular proteins. Catalyzes the removal of unsubstituted N-terminal amino acids from various peptides. This Synechocystis sp. (strain ATCC 27184 / PCC 6803 / Kazusa) protein is Probable cytosol aminopeptidase (pepA).